Here is a 433-residue protein sequence, read N- to C-terminus: Indole diterpene prenyltransferase terF (433 aa).

Belongs to the tryptophan dimethylallyltransferase family.

It functions in the pathway secondary metabolite biosynthesis. Its function is as follows. Indole diterpene prenyltransferase; part of the gene cluster that mediates the biosynthesis of terpendoles, indole-diterpene (IDT) mycotoxins including terpendole I, terpendole K, terpendole C, as well as the kinesin Eg5 inhibitor terpendole E. Terpendoles biosynthesis begins with the synthesis of geranylgeranyl diphosphate (GGPP) by a yet unidentified GGPP synthase. Condensation of indole-3-glycerol phosphate with GGPP by the prenyltransferase terC then forms 3-geranylgeranylindole (3-GGI), followed by epoxidation and cyclization of this intermediate (by the FAD-dependent monooxygeanse terM and the terpene cyclase terB) to form paspaline. The cytochrome monooxygenase terQ then hydroxylates paspalline at C-11 to yield terpendole E. The cytochrome monooxygenase terP converts terpendole E to 13-desoxyterpendole I, and terQ converts 13-desoxyterpendole I into terpendole I. TerF and terK are required for conversion of terpendole I to terpendole C which is further converted to terpendole K. The polypeptide is Indole diterpene prenyltransferase terF (Tolypocladium album (Soil fungus)).